A 331-amino-acid chain; its full sequence is dTDP-glucose 4,6-dehydratase (331 aa).

NAD(+) is bound by residues 11-12 (FI), 33-36 (DALT), 57-58 (DI), 77-81 (FAAET), and serine 96. Threonine 81 provides a ligand contact to substrate. Threonine 120 provides a ligand contact to substrate. Aspartate 121 acts as the Proton donor in catalysis. Active-site proton acceptor residues include glutamate 122 and tyrosine 147. 147–151 (YSSTK) is an NAD(+) binding site. Substrate is bound at residue asparagine 176. Asparagine 177 contacts NAD(+). Substrate is bound by residues 186–191 (KFIPRQ), 202–204 (KLY), arginine 211, asparagine 246, and 269–273 (DRAGH).

The protein belongs to the NAD(P)-dependent epimerase/dehydratase family. dTDP-glucose dehydratase subfamily. As to quaternary structure, homodimer. NAD(+) is required as a cofactor.

It carries out the reaction dTDP-alpha-D-glucose = dTDP-4-dehydro-6-deoxy-alpha-D-glucose + H2O. It participates in carbohydrate biosynthesis; dTDP-L-rhamnose biosynthesis. Its function is as follows. Catalyzes the dehydration of dTDP-D-glucose to form dTDP-6-deoxy-D-xylo-4-hexulose via a three-step process involving oxidation, dehydration and reduction. Involved in the biosynthesis of the dTDP-L-rhamnose which is a component of the critical linker, D-N-acetylglucosamine-L-rhamnose disaccharide, which connects the galactan region of arabinogalactan to peptidoglycan via a phosphodiester linkage. In Mycolicibacterium smegmatis (strain ATCC 700084 / mc(2)155) (Mycobacterium smegmatis), this protein is dTDP-glucose 4,6-dehydratase (rmlB).